Here is a 395-residue protein sequence, read N- to C-terminus: Flap endonuclease 1 (395 aa).

The N-domain stretch occupies residues 1–104 (MGIKHLYQVI…GELAKRFMRK (104 aa)). Asp34 contacts Mg(2+). Residues Arg47 and Arg70 each contribute to the DNA site. Mg(2+) is bound by residues Asp86, Glu158, Glu160, Asp179, and Asp181. The tract at residues 122–253 (DVEKFSRRTV…NTALKLIRDH (132 aa)) is I-domain. Residue Glu158 participates in DNA binding. DNA contacts are provided by Gly231 and Asp233. Asp233 contributes to the Mg(2+) binding site. An interaction with PCNA region spans residues 341–349 (QQSRLEGFF). Basic and acidic residues predominate over residues 357–389 (QEKATLKRKHEEKLELQKKKKKEEAKAKKEAKS). The interval 357–395 (QEKATLKRKHEEKLELQKKKKKEEAKAKKEAKSKPRGAV) is disordered.

This sequence belongs to the XPG/RAD2 endonuclease family. FEN1 subfamily. In terms of assembly, interacts with PCNA. Three molecules of FEN1 bind to one PCNA trimer with each molecule binding to one PCNA monomer. PCNA stimulates the nuclease activity without altering cleavage specificity. It depends on Mg(2+) as a cofactor. Phosphorylated. Phosphorylation upon DNA damage induces relocalization to the nuclear plasma.

The protein resides in the nucleus. The protein localises to the nucleolus. It localises to the nucleoplasm. Its subcellular location is the mitochondrion. Functionally, structure-specific nuclease with 5'-flap endonuclease and 5'-3' exonuclease activities involved in DNA replication and repair. During DNA replication, cleaves the 5'-overhanging flap structure that is generated by displacement synthesis when DNA polymerase encounters the 5'-end of a downstream Okazaki fragment. It enters the flap from the 5'-end and then tracks to cleave the flap base, leaving a nick for ligation. Also involved in the long patch base excision repair (LP-BER) pathway, by cleaving within the apurinic/apyrimidinic (AP) site-terminated flap. Acts as a genome stabilization factor that prevents flaps from equilibrating into structures that lead to duplications and deletions. Also possesses 5'-3' exonuclease activity on nicked or gapped double-stranded DNA, and exhibits RNase H activity. Also involved in replication and repair of rDNA and in repairing mitochondrial DNA. This Ajellomyces dermatitidis (strain ER-3 / ATCC MYA-2586) (Blastomyces dermatitidis) protein is Flap endonuclease 1.